The following is a 299-amino-acid chain: Capsid protein (299 aa).

The tract at residues 1-46 (MPPKVAPESSDAVSSQEQPQRPPPATPPVPTPPPGRREEVGDRAED) is disordered. Over residues 20–34 (QRPPPATPPVPTPPP) the composition is skewed to pro residues. Over residues 35 to 46 (GRREEVGDRAED) the composition is skewed to basic and acidic residues.

The protein belongs to the potexviruses coat protein family.

The protein localises to the virion. Functionally, required for genome encapsidation. Forms ribonucleoprotein complexes along with TGB1 helicase and viral RNA. This is Capsid protein from Helenium virus S (HelVS).